A 117-amino-acid polypeptide reads, in one-letter code: MKLCAVIIASLLVCVAVASSSDNQKEFAQEKEMTREETQSLGEHEKDDEVTGSEERSCIEEWKTCENDCECCGMSTLCAASWVDGHEIKLCRNEGGKLKKVLHFIQKSVSKIRSCKK.

A signal peptide spans 1–20 (MKLCAVIIASLLVCVAVASS). The disordered stretch occupies residues 20-55 (SSDNQKEFAQEKEMTREETQSLGEHEKDDEVTGSEE). Positions 21–56 (SDNQKEFAQEKEMTREETQSLGEHEKDDEVTGSEER) are excised as a propeptide. The segment covering 23 to 55 (NQKEFAQEKEMTREETQSLGEHEKDDEVTGSEE) has biased composition (basic and acidic residues). Disulfide bonds link cysteine 58-cysteine 72, cysteine 65-cysteine 78, cysteine 69-cysteine 115, and cysteine 71-cysteine 91.

Belongs to the neurotoxin 03 (Tx2) family. 02 subfamily. HNTX-XV sub-subfamily. As to expression, expressed by the venom gland.

It is found in the secreted. In terms of biological role, putative ion channel inhibitor. The polypeptide is Hainantoxin-XV-3 (Cyriopagopus hainanus (Chinese bird spider)).